A 342-amino-acid chain; its full sequence is Lipase B (342 aa).

The first 18 residues, 1–18 (MKLLSLTGVAGVLATCVA), serve as a signal peptide directing secretion. Positions 19 to 25 (ATPLVKR) are excised as a propeptide. C47 and C89 are joined by a disulfide. A glycan (N-linked (GlcNAc...) asparagine) is linked at N99. Residues S130, D212, and H249 contribute to the active site. Cystine bridges form between C241–C283 and C318–C336.

The enzyme catalyses a triacylglycerol + H2O = a diacylglycerol + a fatty acid + H(+). Hydrolysis of triglycerides. Is very stereospecific both in hydrolysis and in organic synthesis and has a potentially important application in glucolipid synthesis. The protein is Lipase B of Pseudozyma antarctica (Yeast).